The following is a 288-amino-acid chain: Small ribosomal subunit protein uS3 (288 aa).

One can recognise a KH type-2 domain in the interval 39-107; sequence VREYLKAKLK…PVAVNIEEVR (69 aa). Residues 209 to 288 form a disordered region; sequence GRNDLPAAET…AAAAADGKGE (80 aa). The span at 219 to 238 shows a compositional bias: basic and acidic residues; it reads PRPEEERRPRGPRRDGRPGD. The span at 277–288 shows a compositional bias: low complexity; it reads APAAAAADGKGE.

This sequence belongs to the universal ribosomal protein uS3 family. Part of the 30S ribosomal subunit. Forms a tight complex with proteins S10 and S14.

Functionally, binds the lower part of the 30S subunit head. Binds mRNA in the 70S ribosome, positioning it for translation. The chain is Small ribosomal subunit protein uS3 from Acidovorax sp. (strain JS42).